We begin with the raw amino-acid sequence, 205 residues long: DUF724 domain-containing protein 4 (205 aa).

The segment at Asp28–Gly59 is disordered. Residues Val63–Lys189 enclose the DUF724 domain.

Expressed in roots, leaves, stems, flowers and siliques.

It localises to the nucleus. In terms of biological role, may be involved in the polar growth of plant cells via transportation of RNAs. The polypeptide is DUF724 domain-containing protein 4 (Arabidopsis thaliana (Mouse-ear cress)).